A 467-amino-acid chain; its full sequence is Palmitoyltransferase ZDHHC18-A (467 aa).

The Cytoplasmic segment spans residues 1–59; sequence MKNCEYQQIDPRALRTPSSRTSSTLPCGRKGSQRLRRKWEVFPGKNRFYCDGRIMLARQ. A helical transmembrane segment spans residues 60–80; sequence CGVLPLTIGLIFITSVLFFTF. At 81–88 the chain is on the lumenal side; that stretch reads DCPFLVDH. A helical membrane pass occupies residues 89–109; that stretch reads LTVFIPVIGGVLFIFVVISLL. Residues 110 to 204 are Cytoplasmic-facing; sequence QTSFTDPGIL…GNCVGKRNYR (95 aa). The DHHC domain occupies 161–211; that stretch reads KYCFTCKMFRPPRTSHCSLCDNCVERFDHHCPWVGNCVGKRNYRFFYAFIV. Catalysis depends on Cys-191, which acts as the S-palmitoyl cysteine intermediate. A helical membrane pass occupies residues 205–225; it reads FFYAFIVSLSFLTSFIFGCVI. Topologically, residues 226–247 are lumenal; it reads THLTLRSQGGNGFIQAIQDSPA. Residues 248-268 form a helical membrane-spanning segment; it reads SVVELVICFFSIWSILGLSGF. The Cytoplasmic segment spans residues 269 to 467; sequence HTYLVASNLT…APDMGFIPLN (199 aa).

This sequence belongs to the DHHC palmitoyltransferase family. ERF2/ZDHHC9 subfamily.

It is found in the golgi apparatus membrane. It catalyses the reaction L-cysteinyl-[protein] + hexadecanoyl-CoA = S-hexadecanoyl-L-cysteinyl-[protein] + CoA. In terms of biological role, palmitoyltransferase that catalyzes the addition of palmitate onto various protein substrates, such as CGAS, HRAS and LCK. This is Palmitoyltransferase ZDHHC18-A from Danio rerio (Zebrafish).